Reading from the N-terminus, the 79-residue chain is MAKAAALRKPKKKVNPLDKDGITYIDYKDTALLRKFISDRGKIRARRVTGVTSQQQRQIARAVKNAREMALLPYTATAR.

Belongs to the bacterial ribosomal protein bS18 family. Part of the 30S ribosomal subunit. Forms a tight heterodimer with protein bS6.

In terms of biological role, binds as a heterodimer with protein bS6 to the central domain of the 16S rRNA, where it helps stabilize the platform of the 30S subunit. This chain is Small ribosomal subunit protein bS18, found in Salinispora arenicola (strain CNS-205).